Consider the following 458-residue polypeptide: Phosphoglucosamine mutase (458 aa).

The active-site Phosphoserine intermediate is S106. Mg(2+) contacts are provided by S106, D247, D249, and D251. S106 is subject to Phosphoserine.

It belongs to the phosphohexose mutase family. Mg(2+) serves as cofactor. In terms of processing, activated by phosphorylation.

It carries out the reaction alpha-D-glucosamine 1-phosphate = D-glucosamine 6-phosphate. Its function is as follows. Catalyzes the conversion of glucosamine-6-phosphate to glucosamine-1-phosphate. The protein is Phosphoglucosamine mutase of Chlamydia trachomatis serovar L2 (strain ATCC VR-902B / DSM 19102 / 434/Bu).